Consider the following 59-residue polypeptide: MSEIDKSTIDKYINILKSKLDQKKNELLSKINMEYEKTLKQRLDELEKLKGNILKEVQK.

It to E.hirae NtpH. Sul-ATPase is composed of six (or maybe five) subunits: alpha, beta, delta, gamma, C (proteolipid), and possibly epsilon.

It catalyses the reaction ATP + H2O + 4 H(+)(in) = ADP + phosphate + 5 H(+)(out). This Sulfurisphaera tokodaii (strain DSM 16993 / JCM 10545 / NBRC 100140 / 7) (Sulfolobus tokodaii) protein is Membrane-associated ATPase epsilon chain (atpE).